Reading from the N-terminus, the 391-residue chain is MKFIDEALIRVEAGDGGNGCVSFRREKYIPKGGPDGGDGGDGGDVYLIADENLNTLIDYRFEKRYAAGRGENGRSAGCTGHRGNDITLRVPVGTRAIDNDTKEVIGDLTQHGMKMLVAKGGYHGLGNTRFKSSVNRAPRQKTNGTAGEKRDLLLELMLLADVGMLGLPNAGKSTFIRSVSAAKPKVADYPFTTLVPSLGVARVGSDRSFVVADIPGLIEGAAEGAGLGIRFLKHLERCRVLIHLVDIMPIDESDPVQNITVIESELYQYSEKLADKPTWLVFNKIDTIGEEIAAEQAKNIAEQIGWQGDYYLISAATGQNVQQLTRDIMDFIEANPRQIIEENKALDEVKFKWDDYHQQAMQHPVEEDWSDFDDEWSEEDEEGVEIIYERG.

The 159-residue stretch at 1–159 (MKFIDEALIR…RDLLLELMLL (159 aa)) folds into the Obg domain. The region spanning 160-333 (ADVGMLGLPN…LTRDIMDFIE (174 aa)) is the OBG-type G domain. GTP is bound by residues 166–173 (GLPNAGKS), 191–195 (FTTLV), 213–216 (DIPG), 283–286 (NKID), and 314–316 (SAA). Mg(2+)-binding residues include serine 173 and threonine 193.

Belongs to the TRAFAC class OBG-HflX-like GTPase superfamily. OBG GTPase family. In terms of assembly, monomer. Mg(2+) serves as cofactor.

The protein localises to the cytoplasm. In terms of biological role, an essential GTPase which binds GTP, GDP and possibly (p)ppGpp with moderate affinity, with high nucleotide exchange rates and a fairly low GTP hydrolysis rate. Plays a role in control of the cell cycle, stress response, ribosome biogenesis and in those bacteria that undergo differentiation, in morphogenesis control. This is GTPase Obg from Haemophilus ducreyi (strain 35000HP / ATCC 700724).